A 328-amino-acid polypeptide reads, in one-letter code: Protein MGF 300-4L (328 aa).

Belongs to the asfivirus MGF 300 family.

The protein is Protein MGF 300-4L of Ornithodoros (relapsing fever ticks).